The chain runs to 273 residues: NADH-ubiquinone oxidoreductase 29.9 kDa subunit, mitochondrial (273 aa).

Residues 1 to 8 constitute a mitochondrion transit peptide; that stretch reads MRAALRLL.

This sequence belongs to the complex I NDUFA5 subunit family. In terms of assembly, complex I is composed of about 40 different subunits.

It is found in the mitochondrion inner membrane. Functionally, accessory subunit of the mitochondrial membrane respiratory chain NADH dehydrogenase (Complex I), that is believed not to be involved in catalysis. Complex I functions in the transfer of electrons from NADH to the respiratory chain. The immediate electron acceptor for the enzyme is believed to be ubiquinone. This Neurospora crassa (strain ATCC 24698 / 74-OR23-1A / CBS 708.71 / DSM 1257 / FGSC 987) protein is NADH-ubiquinone oxidoreductase 29.9 kDa subunit, mitochondrial (nuo-32).